Consider the following 663-residue polypeptide: Rho GTPase-activating protein 18 (663 aa).

Disordered regions lie at residues 14-73 (AYHP…DESM) and 85-106 (RSNENRQEGQEAIVVKEPDEGE). Basic and acidic residues predominate over residues 27-37 (SHVKGGDEATS). Positions 38–51 (SRRYGQYTINQEGS) are enriched in polar residues. A phosphoserine mark is found at Ser65 and Ser68. Basic and acidic residues predominate over residues 85–102 (RSNENRQEGQEAIVVKEP). Thr156 carries the phosphothreonine modification. Disordered regions lie at residues 173 to 228 (FAQQ…PASE) and 245 to 277 (KEFSKERTQKISSNDSLPSFRLPKDKTGTTRIG). Composition is skewed to basic and acidic residues over residues 178–205 (EAQEKPPDDSDLRSVRTNENKGQGKDDQ) and 212–222 (DSKEQISRVPE). 2 positions are modified to phosphoserine: Ser260 and Ser263. The region spanning 324-523 (IPLTILLEQD…LLIRYQKILW (200 aa)) is the Rho-GAP domain. Ser610 is subject to Phosphoserine.

As to quaternary structure, interacts with MPHOSPH6. As to expression, widely expressed: expressed in most organs, except small intestine.

The protein localises to the cytoplasm. Its function is as follows. Rho GTPase activating protein that suppresses F-actin polymerization by inhibiting Rho. Rho GTPase activating proteins act by converting Rho-type GTPases to an inactive GDP-bound state. Plays a key role in tissue tension and 3D tissue shape by regulating cortical actomyosin network formation. Acts downstream of YAP1 and inhibits actin polymerization, which in turn reduces nuclear localization of YAP1. Regulates cell shape, spreading, and migration. This chain is Rho GTPase-activating protein 18, found in Mus musculus (Mouse).